The primary structure comprises 189 residues: Glucose-6-phosphate isomerase (189 aa).

His88, His90, Glu97, and His136 together coordinate Fe cation.

It belongs to the archaeal-type GPI family. Homodimer. Requires Fe cation as cofactor.

It localises to the cytoplasm. The catalysed reaction is alpha-D-glucose 6-phosphate = beta-D-fructose 6-phosphate. Its pathway is carbohydrate degradation; glycolysis; D-glyceraldehyde 3-phosphate and glycerone phosphate from D-glucose: step 2/4. With respect to regulation, inhibited by mannose 6-phosphate, fructose 1-phosphate and fructose 1,6-bisphosphate. The protein is Glucose-6-phosphate isomerase (pgiA) of Pyrococcus furiosus (strain ATCC 43587 / DSM 3638 / JCM 8422 / Vc1).